The sequence spans 91 residues: Small ribosomal subunit protein bS20 (91 aa).

Positions 1 to 25 (MANTKSAEKRHRQSLKRRARNVTVR) are disordered. Basic residues predominate over residues 8–20 (EKRHRQSLKRRAR).

The protein belongs to the bacterial ribosomal protein bS20 family.

Functionally, binds directly to 16S ribosomal RNA. This is Small ribosomal subunit protein bS20 from Myxococcus xanthus (strain DK1622).